The primary structure comprises 269 residues: Hydroxyethylthiazole kinase (269 aa).

Substrate is bound at residue M45. R121 and T167 together coordinate ATP. G194 lines the substrate pocket.

It belongs to the Thz kinase family. Mg(2+) serves as cofactor.

It catalyses the reaction 5-(2-hydroxyethyl)-4-methylthiazole + ATP = 4-methyl-5-(2-phosphooxyethyl)-thiazole + ADP + H(+). The protein operates within cofactor biosynthesis; thiamine diphosphate biosynthesis; 4-methyl-5-(2-phosphoethyl)-thiazole from 5-(2-hydroxyethyl)-4-methylthiazole: step 1/1. Catalyzes the phosphorylation of the hydroxyl group of 4-methyl-5-beta-hydroxyethylthiazole (THZ). The chain is Hydroxyethylthiazole kinase from Bacillus mycoides (strain KBAB4) (Bacillus weihenstephanensis).